A 349-amino-acid polypeptide reads, in one-letter code: Glycerol-3-phosphate dehydrogenase [NAD(P)+] (349 aa).

3 residues coordinate NADPH: Trp16, Arg36, and Lys110. Sn-glycerol 3-phosphate-binding residues include Lys110, Gly138, and Thr140. Ala142 contacts NADPH. The sn-glycerol 3-phosphate site is built by Lys193, Asp246, Ser256, Arg257, and Asn258. Lys193 serves as the catalytic Proton acceptor. Arg257 is a binding site for NADPH. Residues Val281 and Glu283 each coordinate NADPH.

The protein belongs to the NAD-dependent glycerol-3-phosphate dehydrogenase family.

Its subcellular location is the cytoplasm. It carries out the reaction sn-glycerol 3-phosphate + NAD(+) = dihydroxyacetone phosphate + NADH + H(+). It catalyses the reaction sn-glycerol 3-phosphate + NADP(+) = dihydroxyacetone phosphate + NADPH + H(+). It functions in the pathway membrane lipid metabolism; glycerophospholipid metabolism. Its function is as follows. Catalyzes the reduction of the glycolytic intermediate dihydroxyacetone phosphate (DHAP) to sn-glycerol 3-phosphate (G3P), the key precursor for phospholipid synthesis. In Rhodospirillum rubrum (strain ATCC 11170 / ATH 1.1.1 / DSM 467 / LMG 4362 / NCIMB 8255 / S1), this protein is Glycerol-3-phosphate dehydrogenase [NAD(P)+].